A 185-amino-acid polypeptide reads, in one-letter code: Ribosome-recycling factor (185 aa).

Belongs to the RRF family.

It localises to the cytoplasm. Its function is as follows. Responsible for the release of ribosomes from messenger RNA at the termination of protein biosynthesis. May increase the efficiency of translation by recycling ribosomes from one round of translation to another. In Streptococcus sanguinis (strain SK36), this protein is Ribosome-recycling factor.